The primary structure comprises 119 residues: Protein phosphatase EYA4 (119 aa).

It belongs to the HAD-like hydrolase superfamily. EYA family. The cofactor is Mg(2+).

It localises to the cytoplasm. The protein resides in the nucleus. It carries out the reaction O-phospho-L-tyrosyl-[protein] + H2O = L-tyrosyl-[protein] + phosphate. Tyrosine phosphatase that specifically dephosphorylates 'Tyr-142' of histone H2AX (H2AXY142ph). 'Tyr-142' phosphorylation of histone H2AX plays a central role in DNA repair and acts as a mark that distinguishes between apoptotic and repair responses to genotoxic stress. Promotes efficient DNA repair by dephosphorylating H2AX, promoting the recruitment of DNA repair complexes containing MDC1. Its function as histone phosphatase probably explains its role in transcription regulation during organogenesis. May be involved in development of the eye. The chain is Protein phosphatase EYA4 (eya4) from Takifugu rubripes (Japanese pufferfish).